The primary structure comprises 315 residues: Homeobox-leucine zipper protein HAT3 (315 aa).

A disordered region spans residues 140–163 (SCSLGGGSDDEDGSGNGDDSSRKK). A DNA-binding region (homeobox) is located at residues 159–218 (SSRKKLRLSKEQALVLEETFKEHSTLNPKQKMALAKQLNLRTRQVEVWFQNRRARTKLKQ). A leucine-zipper region spans residues 226–247 (LKRCCENLTDENRRLQKEVSEL). Residues 280–305 (SSSSVAPPVMNSSSPMGPMSPWAAMP) are compositionally biased toward low complexity. Positions 280–315 (SSSSVAPPVMNSSSPMGPMSPWAAMPLRQRPAAGSH) are disordered.

The protein belongs to the HD-ZIP homeobox family. Class II subfamily.

Its subcellular location is the nucleus. Its function is as follows. Probable transcription factor. This chain is Homeobox-leucine zipper protein HAT3 (HAT3), found in Arabidopsis thaliana (Mouse-ear cress).